Here is a 267-residue protein sequence, read N- to C-terminus: Ribosomal RNA small subunit methyltransferase A (267 aa).

Asparagine 18, leucine 20, glycine 45, glutamate 66, aspartate 91, and asparagine 112 together coordinate S-adenosyl-L-methionine.

It belongs to the class I-like SAM-binding methyltransferase superfamily. rRNA adenine N(6)-methyltransferase family. RsmA subfamily.

The protein resides in the cytoplasm. The enzyme catalyses adenosine(1518)/adenosine(1519) in 16S rRNA + 4 S-adenosyl-L-methionine = N(6)-dimethyladenosine(1518)/N(6)-dimethyladenosine(1519) in 16S rRNA + 4 S-adenosyl-L-homocysteine + 4 H(+). In terms of biological role, specifically dimethylates two adjacent adenosines (A1518 and A1519) in the loop of a conserved hairpin near the 3'-end of 16S rRNA in the 30S particle. May play a critical role in biogenesis of 30S subunits. In Shewanella pealeana (strain ATCC 700345 / ANG-SQ1), this protein is Ribosomal RNA small subunit methyltransferase A.